The primary structure comprises 258 residues: Protein UL24 homolog (258 aa).

The protein belongs to the herpesviridae UL24 family.

It localises to the virion. The protein localises to the host cytoplasm. It is found in the host nucleus. The protein resides in the host nucleolus. Its subcellular location is the host Golgi apparatus. Its function is as follows. May participate in nuclear egress of viral particles. Plays a role in the dispersal of several host nucleolar proteins including NCL/nucleolin and NPM1. Since deletion of host NCL/nucleolin negatively impact on nuclear egress, UL24 supposedly acts on this process through its effect on host nucleoli. This chain is Protein UL24 homolog, found in Varicella-zoster virus (strain Dumas) (HHV-3).